Consider the following 474-residue polypeptide: Vasculin-like protein 1 (474 aa).

Residues 17–42 (QSAKSPTATFEKHGEHLPRGEGRFGV) form a disordered region. The segment covering 26-38 (FEKHGEHLPRGEG) has biased composition (basic and acidic residues). 2 positions are modified to phosphoserine: serine 49 and serine 76. Positions 91 to 191 (GNPSGWHSSS…VWENPPSAKQ (101 aa)) are disordered. Over residues 116–128 (NHRHWNGSFHSRK) the composition is skewed to basic residues. Over residues 136 to 154 (PPMEIREEKKEDKVEKLQF) the composition is skewed to basic and acidic residues. Phosphoserine is present on serine 202. Residues 238 to 371 (LVPKPVPPPS…EEGCHQNGLA (134 aa)) form a disordered region. The span at 262–277 (GSLSSSRESAFTSPIS) shows a compositional bias: polar residues. A compositionally biased stretch (low complexity) spans 291–312 (SSPKESPSSTTPPIEISSSRLT). Serine 292 is subject to Phosphoserine. A Phosphothreonine modification is found at threonine 301. Composition is skewed to basic and acidic residues over residues 317–346 (RTTD…CDKL) and 356–365 (EPKENGEEGC). Position 382 is a phosphoserine (serine 382). Residues 453-474 (AEFEDSDTETSSSETSDDDAWK) form a disordered region.

This sequence belongs to the vasculin family.

It is found in the nucleus. In terms of biological role, possible transcription factor. This is Vasculin-like protein 1 (GPBP1L1) from Homo sapiens (Human).